We begin with the raw amino-acid sequence, 73 residues long: MSKLGVLLTICLLLFPLTALPMDGDQSVDRPAERMQDDISSEQYPLFNQKRRCCGEGASCPVYSRDRLICSCC.

Positions 1-19 (MSKLGVLLTICLLLFPLTA) are cleaved as a signal peptide. Positions 20 to 49 (LPMDGDQSVDRPAERMQDDISSEQYPLFNQ) are excised as a propeptide. 3 disulfide bridges follow: Cys53–Cys72, Cys54–Cys70, and Cys60–Cys73.

Belongs to the conotoxin M superfamily. Expressed by the venom duct.

The protein localises to the secreted. In terms of biological role, shows a paralytic effect in fish. In Conus consors (Singed cone), this protein is Conotoxin CnIIIE.